Consider the following 215-residue polypeptide: UPF0502 protein YceH (215 aa).

Lys-80 is subject to N6-acetyllysine.

The protein belongs to the UPF0502 family.

In Escherichia coli O81 (strain ED1a), this protein is UPF0502 protein YceH.